Here is a 277-residue protein sequence, read N- to C-terminus: Probable redox regulatory protein ML2435 (277 aa).

This sequence belongs to the Rv0495c family.

In terms of biological role, essential for maintaining intracellular redox homeostasis. The chain is Probable redox regulatory protein ML2435 from Mycobacterium leprae (strain TN).